A 398-amino-acid chain; its full sequence is Candidapepsin-3 (398 aa).

Positions 1 to 18 (MFLKNIFIALAIALLADA) are cleaved as a signal peptide. The propeptide at 19–58 (TPTTSNNSPGFVALNFDVIKTHKNVTGPQGEINTNVNVKR) is activation peptide. N-linked (GlcNAc...) asparagine glycosylation is present at asparagine 42. In terms of domain architecture, Peptidase A1 spans 72–384 (YASDITVGSN…DLDDNEISLA (313 aa)). Residue aspartate 90 is part of the active site. 90-92 (DTG) is a pepstatin A binding site. The segment covering 103 to 112 (VSCQAGQGQD) has biased composition (polar residues). Residues 103–139 (VSCQAGQGQDPNFCKNEGTYSPSSSSSSQNLNSPFSI) form a disordered region. Cysteine 105 and cysteine 116 are disulfide-bonded. Over residues 123-138 (SPSSSSSSQNLNSPFS) the composition is skewed to low complexity. Pepstatin A is bound by residues 140 to 143 (EYGD) and 274 to 278 (DSGTT). Aspartate 274 is an active-site residue. Cysteine 312 and cysteine 350 are joined by a disulfide. Asparagine 313 carries N-linked (GlcNAc...) asparagine glycosylation.

The protein belongs to the peptidase A1 family. In terms of processing, O-glycosylated.

The protein resides in the secreted. It carries out the reaction Preferential cleavage at the carboxyl of hydrophobic amino acids, but fails to cleave 15-Leu-|-Tyr-16, 16-Tyr-|-Leu-17 and 24-Phe-|-Phe-25 of insulin B chain. Activates trypsinogen, and degrades keratin.. The chain is Candidapepsin-3 (SAP3) from Candida albicans (strain WO-1) (Yeast).